A 121-amino-acid chain; its full sequence is Large ribosomal subunit protein bL19 (121 aa).

It belongs to the bacterial ribosomal protein bL19 family.

Functionally, this protein is located at the 30S-50S ribosomal subunit interface and may play a role in the structure and function of the aminoacyl-tRNA binding site. In Borrelia garinii subsp. bavariensis (strain ATCC BAA-2496 / DSM 23469 / PBi) (Borreliella bavariensis), this protein is Large ribosomal subunit protein bL19.